Consider the following 407-residue polypeptide: 4-hydroxybenzoate polyprenyltransferase, mitochondrial (407 aa).

The transit peptide at Met1–Val20 directs the protein to the mitochondrion. Transmembrane regions (helical) follow at residues Ile137–Gly157, Phe162–Ile182, Phe210–Leu230, Phe254–Trp274, Gly279–Val299, and Leu330–Ala350.

Belongs to the UbiA prenyltransferase family. It depends on Mg(2+) as a cofactor. In terms of tissue distribution, expressed in flowers.

The protein localises to the mitochondrion inner membrane. The catalysed reaction is an all-trans-polyprenyl diphosphate + 4-hydroxybenzoate = a 4-hydroxy-3-(all-trans-polyprenyl)benzoate + diphosphate. Its pathway is cofactor biosynthesis; ubiquinone biosynthesis. Functionally, catalyzes the prenylation of para-hydroxybenzoate (PHB) with an all-trans polyprenyl group. Mediates the second step in the final reaction sequence of coenzyme Q (CoQ) biosynthesis, which is the condensation of the polyisoprenoid side chain with PHB, generating the first membrane-bound Q intermediate. Required for embryo development. The chain is 4-hydroxybenzoate polyprenyltransferase, mitochondrial from Arabidopsis thaliana (Mouse-ear cress).